Here is a 231-residue protein sequence, read N- to C-terminus: Cytochrome c oxidase subunit 2 (231 aa).

At 1–14 (MAHPSQLGLQDAAS) the chain is on the mitochondrial intermembrane side. Residues 15 to 45 (PVMEELLHFHDHALMIVFLISTLVFYIILAM) form a helical membrane-spanning segment. Topologically, residues 46–59 (MTTKMTDKYILDAQ) are mitochondrial matrix. Residues 60 to 87 (EIEIVWTLLPAIVLILVALPSLRILYLI) traverse the membrane as a helical segment. Residues 88–231 (DEVENPHLTI…WSSSMLEEAX (144 aa)) lie on the Mitochondrial intermembrane side of the membrane. Residues H161, C196, E198, C200, H204, and M207 each coordinate Cu cation. E198 serves as a coordination point for Mg(2+).

The protein belongs to the cytochrome c oxidase subunit 2 family. As to quaternary structure, component of the cytochrome c oxidase (complex IV, CIV), a multisubunit enzyme composed of 14 subunits. The complex is composed of a catalytic core of 3 subunits MT-CO1, MT-CO2 and MT-CO3, encoded in the mitochondrial DNA, and 11 supernumerary subunits COX4I, COX5A, COX5B, COX6A, COX6B, COX6C, COX7A, COX7B, COX7C, COX8 and NDUFA4, which are encoded in the nuclear genome. The complex exists as a monomer or a dimer and forms supercomplexes (SCs) in the inner mitochondrial membrane with NADH-ubiquinone oxidoreductase (complex I, CI) and ubiquinol-cytochrome c oxidoreductase (cytochrome b-c1 complex, complex III, CIII), resulting in different assemblies (supercomplex SCI(1)III(2)IV(1) and megacomplex MCI(2)III(2)IV(2)). Found in a complex with TMEM177, COA6, COX18, COX20, SCO1 and SCO2. Interacts with TMEM177 in a COX20-dependent manner. Interacts with COX20. Interacts with COX16. The cofactor is Cu cation.

The protein localises to the mitochondrion inner membrane. It carries out the reaction 4 Fe(II)-[cytochrome c] + O2 + 8 H(+)(in) = 4 Fe(III)-[cytochrome c] + 2 H2O + 4 H(+)(out). Its function is as follows. Component of the cytochrome c oxidase, the last enzyme in the mitochondrial electron transport chain which drives oxidative phosphorylation. The respiratory chain contains 3 multisubunit complexes succinate dehydrogenase (complex II, CII), ubiquinol-cytochrome c oxidoreductase (cytochrome b-c1 complex, complex III, CIII) and cytochrome c oxidase (complex IV, CIV), that cooperate to transfer electrons derived from NADH and succinate to molecular oxygen, creating an electrochemical gradient over the inner membrane that drives transmembrane transport and the ATP synthase. Cytochrome c oxidase is the component of the respiratory chain that catalyzes the reduction of oxygen to water. Electrons originating from reduced cytochrome c in the intermembrane space (IMS) are transferred via the dinuclear copper A center (CU(A)) of subunit 2 and heme A of subunit 1 to the active site in subunit 1, a binuclear center (BNC) formed by heme A3 and copper B (CU(B)). The BNC reduces molecular oxygen to 2 water molecules using 4 electrons from cytochrome c in the IMS and 4 protons from the mitochondrial matrix. The sequence is that of Cytochrome c oxidase subunit 2 (MT-CO2) from Latimeria chalumnae (Coelacanth).